A 544-amino-acid polypeptide reads, in one-letter code: Ribosomal oxygenase 1 (544 aa).

The tract at residues 1-78 (MERKHMSALS…HEGERDCREM (78 aa)) is disordered. Positions 10 to 19 (SIYQSLSGGK) are enriched in polar residues. Residues 42-53 (PSKKATKKKGTK) show a composition bias toward basic residues. Over residues 63-78 (SSEKEKHEGERDCREM) the composition is skewed to basic and acidic residues. A JmjC domain is found at 197-342 (CSIRMLNPQA…DLMLKLMPAA (146 aa)). Fe cation contacts are provided by His243, Asp245, and His308.

This sequence belongs to the ROX family. NO66 subfamily. Fe(2+) is required as a cofactor.

The protein localises to the nucleus. It localises to the nucleolus. Its subcellular location is the nucleoplasm. It carries out the reaction N(6),N(6)-dimethyl-L-lysyl(36)-[histone H3] + 2 2-oxoglutarate + 2 O2 = L-lysyl(36)-[histone H3] + 2 formaldehyde + 2 succinate + 2 CO2. It catalyses the reaction N(6)-methyl-L-lysyl-[protein] + 2-oxoglutarate + O2 = L-lysyl-[protein] + formaldehyde + succinate + CO2. The catalysed reaction is L-histidyl-[protein] + 2-oxoglutarate + O2 = (3S)-3-hydroxy-L-histidyl-[protein] + succinate + CO2. In terms of biological role, oxygenase that can act as both a histone lysine demethylase and a ribosomal histidine hydroxylase. Specifically demethylates 'Lys-4' (H3K4me) and 'Lys-36' (H3K36me) of histone H3, thereby playing a central role in histone code. Preferentially demethylates trimethylated H3 'Lys-4' (H3K4me3) and monomethylated H3 'Lys-4' (H3K4me1) residues, while it has weaker activity for dimethylated H3 'Lys-36' (H3K36me2). Also catalyzes demethylation of non-histone proteins. Also catalyzes the hydroxylation of 60S ribosomal protein L8 on 'His-216', thereby playing a role in ribosome biogenesis. The chain is Ribosomal oxygenase 1 (riox1) from Danio rerio (Zebrafish).